Reading from the N-terminus, the 427-residue chain is Putative tyrosine recombinase XerC (427 aa).

Residues 1 to 81 form the Core-binding (CB) domain; it reads MTPQQLTEEY…HLRTIWGYAI (81 aa). Residues 116–305 form the Tyr recombinase domain; sequence RARSWLSMQV…DYDHMRAVLH (190 aa). Active-site residues include Arg156, Lys183, His256, Arg259, and His283. The active-site O-(3'-phospho-DNA)-tyrosine intermediate is the Tyr292. Disordered regions lie at residues 323 to 384 and 401 to 427; these read SGSP…PPDT and RAAT…DSLA. Basic and acidic residues predominate over residues 350 to 362; sequence ARTEPSEPREHTQ. Residues 402–413 are compositionally biased toward low complexity; that stretch reads AATASAVPAATS.

It belongs to the 'phage' integrase family.

It is found in the cytoplasm. Site-specific tyrosine recombinase, which acts by catalyzing the cutting and rejoining of the recombining DNA molecules. In Pseudomonas aeruginosa, this protein is Putative tyrosine recombinase XerC.